A 67-amino-acid polypeptide reads, in one-letter code: Large ribosomal subunit protein eL24 (67 aa).

Zn(2+) contacts are provided by cysteine 7, cysteine 10, cysteine 33, and cysteine 37. A C4-type zinc finger spans residues 7–37 (CSYCGKEFEPGTGKMYVRNDGRVYFFCSRKC).

This sequence belongs to the eukaryotic ribosomal protein eL24 family. Part of the 50S ribosomal subunit. Forms a cluster with proteins L3 and L14. The cofactor is Zn(2+).

Functionally, binds to the 23S rRNA. The polypeptide is Large ribosomal subunit protein eL24 (Thermococcus sibiricus (strain DSM 12597 / MM 739)).